The chain runs to 1159 residues: PAN2-PAN3 deadenylation complex catalytic subunit pan2 (1159 aa).

The WD repeat unit spans residues 276 to 315 (ANVSFMLGIDISPSGEALAINDAECMVHLWGSPAKIHFNE). Residues 316-451 (MSKEVELADV…GAKLNGEAED (136 aa)) form a linker region. Residues 452-821 (DPLLKYSNVE…VPCVLAFQVK (370 aa)) form the USP domain. Residues 872–1048 (LDTEFVDLEK…IEDARMALRL (177 aa)) form the Exonuclease domain. A divalent metal cation contacts are provided by Asp-873, Glu-875, Asp-982, and Asp-1041. A disordered region spans residues 1094 to 1159 (TAVTMQNTNS…GDFFGGSPLK (66 aa)). Positions 1096–1106 (VTMQNTNSGRN) are enriched in polar residues. A compositionally biased stretch (low complexity) spans 1107–1128 (TPTVPDAAGAPAVPASAPTTPG). The segment covering 1143–1153 (TFSGPGAGDFF) has biased composition (gly residues).

This sequence belongs to the peptidase C19 family. PAN2 subfamily. In terms of assembly, forms a heterotrimer with an asymmetric homodimer of the regulatory subunit pan3 to form the poly(A)-nuclease (PAN) deadenylation complex. Requires a divalent metal cation as cofactor.

It localises to the cytoplasm. It carries out the reaction Exonucleolytic cleavage of poly(A) to 5'-AMP.. Positively regulated by the regulatory subunit pan3. Catalytic subunit of the poly(A)-nuclease (PAN) deadenylation complex, one of two cytoplasmic mRNA deadenylases involved in mRNA turnover. PAN specifically shortens poly(A) tails of RNA and the activity is stimulated by poly(A)-binding protein pab1. PAN deadenylation is followed by rapid degradation of the shortened mRNA tails by the CCR4-NOT complex. Deadenylated mRNAs are then degraded by two alternative mechanisms, namely exosome-mediated 3'-5' exonucleolytic degradation, or deadenylation-dependent mRNA decaping and subsequent 5'-3' exonucleolytic degradation by xrn1. May also be involved in post-transcriptional maturation of mRNA poly(A) tails. This Aspergillus terreus (strain NIH 2624 / FGSC A1156) protein is PAN2-PAN3 deadenylation complex catalytic subunit pan2.